A 148-amino-acid chain; its full sequence is 3-dehydroquinate dehydratase (148 aa).

Tyrosine 23 serves as the catalytic Proton acceptor. Residues asparagine 75, histidine 81, and aspartate 88 each contribute to the substrate site. The active-site Proton donor is the histidine 101. Residues 102 to 103 (IS) and arginine 112 each bind substrate.

It belongs to the type-II 3-dehydroquinase family. Homododecamer.

The enzyme catalyses 3-dehydroquinate = 3-dehydroshikimate + H2O. It functions in the pathway metabolic intermediate biosynthesis; chorismate biosynthesis; chorismate from D-erythrose 4-phosphate and phosphoenolpyruvate: step 3/7. In terms of biological role, catalyzes a trans-dehydration via an enolate intermediate. The chain is 3-dehydroquinate dehydratase from Methylococcus capsulatus (strain ATCC 33009 / NCIMB 11132 / Bath).